We begin with the raw amino-acid sequence, 109 residues long: UPF0060 membrane protein RHA1_ro06609 (109 aa).

Transmembrane regions (helical) follow at residues 7–27 (VALFAVAALFEIGGAWLVWQG), 33–53 (GWIWIGAGVAALGAYGFVATL), 62–82 (ILAAYGGVFVAGSLIWGMVAD), and 88–108 (RWDVSGALICLLGMAVIMYAP).

It belongs to the UPF0060 family.

Its subcellular location is the cell membrane. In Rhodococcus jostii (strain RHA1), this protein is UPF0060 membrane protein RHA1_ro06609.